We begin with the raw amino-acid sequence, 627 residues long: MQNYNAKSIEVLTGLDPVKKRPGMYTNIENPNHLIQEIIDNSVDEVLAGFASKINITLYEDNSIEVADDGRGMPVDIHPEHKMSGIELIMTKLHSGGKFSNKNYTHSGGLHGVGVSVVNALSTRLEAEIKRDGNVYHIVFEDGFKTKDLEIIDNVGKKNTGTKIRFWPNKKYFDDIKVNFKALKNLLEAKAILCKALTIKYSNEIKKEKLTWHFETGLKGYLDHKLEAETLPAEPFIIDNFSNGDSYLDAVFCWCEDLSESIKNSYVNLIPTPQDGTHVTGLKNGIYDAIKAYIEKNSLSVKNIKITANDSFAQLNYVISVKITNPQFAGQTKEKLSNKDVTNFVATAVKDLLTIWLNQNPDEARQIVENISKVAQKRINADKKTTRKRIMNTTIRLPGKLTDCISSDVNSTELFIVEGDSAGGSAKQARDKNFQAVLPLKGKILNSWELDADTIMNSQEIHNIATAIGVDPDSDDISALRYNKICILADADSDGLHIATLLCAMFLKHFRKLIENGHIYIAQPPLFRIDIGKSTFYALDENERDTILTKNSKLPGKVNIMRFKGLGEMNPAQLRESAMDVSSRRLLQLTISDVYDDTEMLDMLLAKKRAKDRRDWLENYGDRASVE.

ATP contacts are provided by residues tyrosine 4, asparagine 41, aspartate 68, 109 to 115, and lysine 333; that span reads GLHGVGV. The region spanning 412–525 is the Toprim domain; sequence TELFIVEGDS…NGHIYIAQPP (114 aa). Glutamate 418, aspartate 490, and aspartate 492 together coordinate Mg(2+).

This sequence belongs to the type II topoisomerase family. ParE type 1 subfamily. As to quaternary structure, heterotetramer composed of ParC and ParE. It depends on Mg(2+) as a cofactor. Mn(2+) is required as a cofactor. Ca(2+) serves as cofactor.

The catalysed reaction is ATP-dependent breakage, passage and rejoining of double-stranded DNA.. Pyrrolopyrimidines inhibit both GyrB and its paralog in topoisomerase IV (parE). Topoisomerase IV is essential for chromosome segregation. It relaxes supercoiled DNA. Performs the decatenation events required during the replication of a circular DNA molecule. The polypeptide is DNA topoisomerase 4 subunit B (Francisella tularensis subsp. holarctica (strain LVS)).